We begin with the raw amino-acid sequence, 377 residues long: GDSL esterase/lipase 4 (377 aa).

A signal peptide spans 1–21 (MASPRFNSIIIILFICTISLS). The active-site Nucleophile is the Ser-44. 5 N-linked (GlcNAc...) asparagine glycosylation sites follow: Asn-135, Asn-188, Asn-194, Asn-207, and Asn-241. Catalysis depends on residues Asp-342 and His-345. The N-linked (GlcNAc...) asparagine glycan is linked to Asn-364.

Belongs to the 'GDSL' lipolytic enzyme family.

It localises to the secreted. The polypeptide is GDSL esterase/lipase 4 (GLIP4) (Arabidopsis thaliana (Mouse-ear cress)).